Consider the following 137-residue polypeptide: Cytochrome c2 (137 aa).

The N-terminal stretch at 1–21 is a signal peptide; sequence MKISLTAATVAALVLAAPAFA. Heme c-binding residues include cysteine 34, cysteine 37, histidine 38, and methionine 117.

This sequence belongs to the cytochrome c family. Post-translationally, binds 1 heme c group covalently per subunit.

Functionally, cytochrome c2 is found mainly in purple, non-sulfur, photosynthetic bacteria where it functions as the electron donor to the oxidized bacteriochlorophyll in the photophosphorylation pathway. However, it may also have a role in the respiratory chain and is found in some non-photosynthetic bacteria. The polypeptide is Cytochrome c2 (cycA) (Rhodobacter capsulatus (strain ATCC BAA-309 / NBRC 16581 / SB1003)).